A 272-amino-acid polypeptide reads, in one-letter code: Oligodendrocyte transcription factor 3 (272 aa).

Low complexity predominate over residues Met1–Ser14. Positions Met1–Lys71 are disordered. The span at Asp24–Gln33 shows a compositional bias: basic residues. Polar residues predominate over residues Arg36–Asp46. Positions Ser68–Asn89 form a coiled coil. Residues Gln83–Leu137 enclose the bHLH domain.

It localises to the nucleus. May determine the distinct specification program of class A neurons in the dorsal part of the spinal cord and suppress specification of class B neurons. This chain is Oligodendrocyte transcription factor 3 (OLIG3), found in Homo sapiens (Human).